Here is a 156-residue protein sequence, read N- to C-terminus: Ribosome maturation factor RimP (156 aa).

It belongs to the RimP family.

Its subcellular location is the cytoplasm. In terms of biological role, required for maturation of 30S ribosomal subunits. In Shouchella clausii (strain KSM-K16) (Alkalihalobacillus clausii), this protein is Ribosome maturation factor RimP.